Reading from the N-terminus, the 317-residue chain is Beta-ketoacyl-[acyl-carrier-protein] synthase III (317 aa).

Active-site residues include Cys-112 and His-244. An ACP-binding region spans residues 245-249 (QANLR). Asn-274 is a catalytic residue.

This sequence belongs to the thiolase-like superfamily. FabH family. Homodimer.

It is found in the cytoplasm. It carries out the reaction malonyl-[ACP] + acetyl-CoA + H(+) = 3-oxobutanoyl-[ACP] + CO2 + CoA. It functions in the pathway lipid metabolism; fatty acid biosynthesis. In terms of biological role, catalyzes the condensation reaction of fatty acid synthesis by the addition to an acyl acceptor of two carbons from malonyl-ACP. Catalyzes the first condensation reaction which initiates fatty acid synthesis and may therefore play a role in governing the total rate of fatty acid production. Possesses both acetoacetyl-ACP synthase and acetyl transacylase activities. Its substrate specificity determines the biosynthesis of branched-chain and/or straight-chain of fatty acids. The polypeptide is Beta-ketoacyl-[acyl-carrier-protein] synthase III (Salmonella typhimurium (strain LT2 / SGSC1412 / ATCC 700720)).